An 817-amino-acid polypeptide reads, in one-letter code: Phosphoenolpyruvate synthase (817 aa).

The active-site Tele-phosphohistidine intermediate is histidine 442. Positions 540, 587, 684, 706, 707, 708, and 709 each coordinate substrate. Glutamate 684 is a Mg(2+) binding site. A Mg(2+)-binding site is contributed by aspartate 709. The Proton donor role is filled by cysteine 756.

Belongs to the PEP-utilizing enzyme family. In terms of assembly, homooctamer. Mg(2+) is required as a cofactor.

The catalysed reaction is pyruvate + ATP + H2O = phosphoenolpyruvate + AMP + phosphate + 2 H(+). The protein operates within carbohydrate biosynthesis; gluconeogenesis. Catalyzes the phosphorylation of pyruvate to phosphoenolpyruvate. This is Phosphoenolpyruvate synthase (ppsA) from Pyrococcus furiosus (strain ATCC 43587 / DSM 3638 / JCM 8422 / Vc1).